A 712-amino-acid polypeptide reads, in one-letter code: Potassium transporter 1 (712 aa).

The Cytoplasmic segment spans residues 1–19; that stretch reads MNQSPSLIEQGISQQHLKT. Residues 20 to 40 form a helical membrane-spanning segment; it reads LSCANVLTLAYQSLGVIYGDL. The Extracellular portion of the chain corresponds to 41–67; the sequence is STSPLYVYKTTFSGKLSLHEDDEEIFG. The chain crosses the membrane as a helical span at residues 68–88; it reads VFSFIFWTFTLIALFKYVFIV. Residues 89–154 are Cytoplasmic-facing; sequence LSADDNGEGG…FFEKHPKSQK (66 aa). A helical transmembrane segment spans residues 155–175; that stretch reads CLLLFVLLGTCMAIGDSVLTP. Residues 176 to 189 are Extracellular-facing; the sequence is TISVLSAVSGVKLK. A helical membrane pass occupies residues 190-210; it reads IPNLHENYVVIIACIILVAIF. Over 211–219 the chain is Cytoplasmic; sequence SVQRYGTHR. Residues 220–240 traverse the membrane as a helical segment; sequence VAFIFAPISTAWLLSISSIGV. Topologically, residues 241–267 are extracellular; sequence YNTIKWNPRIVSALSPVYMYKFLRSTG. Residues 268–288 traverse the membrane as a helical segment; that stretch reads VEGWVSLGGVVLSITGVETMF. Topologically, residues 289–300 are cytoplasmic; it reads ADLGHFSSLSIK. A helical transmembrane segment spans residues 301–321; the sequence is VAFSFFVYPCLILAYMGEAAF. Topologically, residues 322 to 340 are extracellular; that stretch reads LSKHHEDIQQSFYKAIPEP. The helical transmembrane segment at 341 to 361 threads the bilayer; sequence VFWPVFIVATFAAVVGSQAVI. Residues 362–392 are Cytoplasmic-facing; that stretch reads SATFSIISQCCALDCFPRVKIIHTSSKIHGQ. The helical transmembrane segment at 393–413 threads the bilayer; it reads IYIPEVNWMLMCLCLAVTIGL. Over 414–424 the chain is Extracellular; sequence RDTNMMGHAYG. Residues 425–445 traverse the membrane as a helical segment; the sequence is LAVTSVMLVTTCLMTLVMTIV. Residues 446 to 449 lie on the Cytoplasmic side of the membrane; that stretch reads WKQR. A helical membrane pass occupies residues 450 to 470; the sequence is IITVLAFVVFFGSIELLYFSS. The Extracellular portion of the chain corresponds to 471-474; that stretch reads CVYK. The helical transmembrane segment at 475 to 495 threads the bilayer; the sequence is VPEGGWIPILLSLTFMAVMYI. Over 496 to 712 the chain is Cytoplasmic; that stretch reads WNYGTTKKHE…LLEVGMVYYV (217 aa).

Belongs to the HAK/KUP transporter (TC 2.A.72.3) family. In terms of tissue distribution, detected in the whole mature plant but preferentially expressed in roots and stems, and in potassium-starved plants.

The protein localises to the cell membrane. In terms of biological role, high-affinity potassium transporter that could play a major role in the uptake of potassium from the rhizosphere. May act as a low-affinity potassium transporter under high potassium concentrations. Could also transport rubidium. This Arabidopsis thaliana (Mouse-ear cress) protein is Potassium transporter 1 (POT1).